The following is a 353-amino-acid chain: uncharacterized protein (353 aa).

Positions 69–106 (ISSATPSSTPPATRASSRLQPPKGHQAGGSNSQQQQPS) are disordered. A compositionally biased stretch (low complexity) spans 70–86 (SSATPSSTPPATRASSR). Residues 319–353 (GENKEKKMREMSRVYREMTRQMDDTRRDLDRLNQG) adopt a coiled-coil conformation.

This is an uncharacterized protein from Gibberella zeae (strain ATCC MYA-4620 / CBS 123657 / FGSC 9075 / NRRL 31084 / PH-1) (Wheat head blight fungus).